The sequence spans 372 residues: NADH-quinone oxidoreductase subunit D (372 aa).

It belongs to the complex I 49 kDa subunit family. In terms of assembly, NDH-1 is composed of 14 different subunits. Subunits NuoB, C, D, E, F, and G constitute the peripheral sector of the complex.

It localises to the cell inner membrane. It catalyses the reaction a quinone + NADH + 5 H(+)(in) = a quinol + NAD(+) + 4 H(+)(out). NDH-1 shuttles electrons from NADH, via FMN and iron-sulfur (Fe-S) centers, to quinones in the respiratory chain. The immediate electron acceptor for the enzyme in this species is believed to be ubiquinone. Couples the redox reaction to proton translocation (for every two electrons transferred, four hydrogen ions are translocated across the cytoplasmic membrane), and thus conserves the redox energy in a proton gradient. The polypeptide is NADH-quinone oxidoreductase subunit D (Desulfotalea psychrophila (strain LSv54 / DSM 12343)).